Here is a 164-residue protein sequence, read N- to C-terminus: UPF0225 protein Shewmr4_2054 (164 aa).

It belongs to the UPF0225 family.

This is UPF0225 protein Shewmr4_2054 from Shewanella sp. (strain MR-4).